Reading from the N-terminus, the 492-residue chain is UPF0652 protein C22H10.08 (492 aa).

Belongs to the UPF0652 family.

It is found in the cytoplasm. It localises to the nucleus. The polypeptide is UPF0652 protein C22H10.08 (Schizosaccharomyces pombe (strain 972 / ATCC 24843) (Fission yeast)).